The chain runs to 299 residues: MRIIVLGSAAGGGHPQWNCHTLASLRAWQQTDGAQRRTQASIAVSADGERWVLINASPDFRQQILATPALWPQHGLRHSPIEAVLLTSGEIDHIAGLLSMRESQRFSLHASSRVLGLLAQNPIFDAVNPQYVSRQPFALDTPLVLCGLQLTPFSVPGKVPLFMESRSGGDLAGSDEETLGLTIDDGRRRMHYIPGCAAMTDALRARLQSAELVFFDGTLWRDDEMVQLGVSQKTGQRMGHMSIDGPDGTIAAFAPLNVARKIFIHLNTTNPVLDTLSPEFASARASGWEVAHDGLEIAL.

This sequence belongs to the PqqB family.

The protein operates within cofactor biosynthesis; pyrroloquinoline quinone biosynthesis. Functionally, may be involved in the transport of PQQ or its precursor to the periplasm. The sequence is that of Coenzyme PQQ synthesis protein B from Xanthomonas euvesicatoria pv. vesicatoria (strain 85-10) (Xanthomonas campestris pv. vesicatoria).